We begin with the raw amino-acid sequence, 171 residues long: 3-hydroxydecanoyl-[acyl-carrier-protein] dehydratase (171 aa).

Residue histidine 70 is part of the active site.

The protein belongs to the thioester dehydratase family. FabA subfamily. In terms of assembly, homodimer.

Its subcellular location is the cytoplasm. The catalysed reaction is a (3R)-hydroxyacyl-[ACP] = a (2E)-enoyl-[ACP] + H2O. It carries out the reaction (3R)-hydroxydecanoyl-[ACP] = (2E)-decenoyl-[ACP] + H2O. It catalyses the reaction (2E)-decenoyl-[ACP] = (3Z)-decenoyl-[ACP]. The protein operates within lipid metabolism; fatty acid biosynthesis. Functionally, necessary for the introduction of cis unsaturation into fatty acids. Catalyzes the dehydration of (3R)-3-hydroxydecanoyl-ACP to E-(2)-decenoyl-ACP and then its isomerization to Z-(3)-decenoyl-ACP. Can catalyze the dehydratase reaction for beta-hydroxyacyl-ACPs with saturated chain lengths up to 16:0, being most active on intermediate chain length. The protein is 3-hydroxydecanoyl-[acyl-carrier-protein] dehydratase of Xanthomonas axonopodis pv. citri (strain 306).